The sequence spans 417 residues: UDP-N-acetylglucosamine 1-carboxyvinyltransferase (417 aa).

22–23 (KN) provides a ligand contact to phosphoenolpyruvate. Position 91 (Arg91) interacts with UDP-N-acetyl-alpha-D-glucosamine. Cys115 serves as the catalytic Proton donor. Cys115 carries the 2-(S-cysteinyl)pyruvic acid O-phosphothioketal modification. UDP-N-acetyl-alpha-D-glucosamine contacts are provided by residues 120 to 124 (RPVDL), Asp304, and Ile326.

The protein belongs to the EPSP synthase family. MurA subfamily.

Its subcellular location is the cytoplasm. It carries out the reaction phosphoenolpyruvate + UDP-N-acetyl-alpha-D-glucosamine = UDP-N-acetyl-3-O-(1-carboxyvinyl)-alpha-D-glucosamine + phosphate. Its pathway is cell wall biogenesis; peptidoglycan biosynthesis. Its function is as follows. Cell wall formation. Adds enolpyruvyl to UDP-N-acetylglucosamine. The protein is UDP-N-acetylglucosamine 1-carboxyvinyltransferase of Nitratidesulfovibrio vulgaris (strain DP4) (Desulfovibrio vulgaris).